The following is a 707-amino-acid chain: E3 ubiquitin-protein ligase MARCHF7 (707 aa).

Met-1 carries the post-translational modification N-acetylmethionine. 5 disordered regions span residues 1 to 126 (MESK…QVPR), 157 to 279 (LMDY…RRTT), 294 to 343 (FFSR…RASE), 361 to 425 (SHNH…HIFR), and 444 to 473 (AANR…GRNT). The segment covering 17–33 (SSSLSARMMSGSRGSSL) has biased composition (low complexity). Residues 37–48 (YHSRDSSFRLDS) show a composition bias toward basic and acidic residues. Positions 52-65 (STSASASASPFQSA) are enriched in low complexity. Composition is skewed to polar residues over residues 66-83 (WYSE…SQNQ), 95-126 (SCTN…QVPR), 189-212 (NSMS…HQTI), and 254-270 (ISNS…FQES). Low complexity predominate over residues 294-303 (FFSRRSSQDS). Composition is skewed to polar residues over residues 304 to 336 (LNTR…TSEV), 373 to 392 (FNQE…SLRN), and 412 to 421 (IPTSDTSSRS). Ser-317 and Ser-389 each carry phosphoserine. Positions 444–470 (AANRPQASAASSSATTGGSTSDSAQGG) are enriched in low complexity. The RING-CH-type zinc finger occupies 544-614 (SEEEEGDLCR…ELCKEKLELN (71 aa)). Zn(2+)-binding residues include Cys-552, Cys-555, Cys-570, Cys-572, His-580, Cys-583, Cys-604, and Cys-607. A Phosphothreonine modification is found at Thr-686. 2 positions are modified to phosphoserine: Ser-687 and Ser-691.

The protein resides in the cytoplasm. It catalyses the reaction S-ubiquitinyl-[E2 ubiquitin-conjugating enzyme]-L-cysteine + [acceptor protein]-L-lysine = [E2 ubiquitin-conjugating enzyme]-L-cysteine + N(6)-ubiquitinyl-[acceptor protein]-L-lysine.. The protein operates within protein modification; protein ubiquitination. Its function is as follows. E3 ubiquitin-protein ligase which may specifically enhance the E2 activity of HIP2. E3 ubiquitin ligases accept ubiquitin from an E2 ubiquitin-conjugating enzyme in the form of a thioester and then directly transfer the ubiquitin to targeted substrates. May be involved in T-cell proliferation by regulating LIF secretion. May play a role in lysosome homeostasis. Promotes 'Lys-6', 'Lys-11' and 'Lys-63'-linked mixed polyubiquitination on ATG14 leading to the inhibition of autophagy by impairing the interaction between ATG14 and STX7. Participates in the dopamine-mediated negative regulation of the NLRP3 inflammasome by promoting its uibiquitination and subsequent degradation. The protein is E3 ubiquitin-protein ligase MARCHF7 (MARCHF7) of Pongo abelii (Sumatran orangutan).